Reading from the N-terminus, the 500-residue chain is Cysteine--tRNA ligase (500 aa).

A Zn(2+)-binding site is contributed by Cys29. Positions 31 to 41 match the 'HIGH' region motif; the sequence is VTVYDLCHLGH. Cys213, His238, and Glu242 together coordinate Zn(2+). Positions 270–274 match the 'KMSKS' region motif; it reads KMSKS. Lys273 is a binding site for ATP.

Belongs to the class-I aminoacyl-tRNA synthetase family. Monomer. Zn(2+) serves as cofactor.

The protein localises to the cytoplasm. It catalyses the reaction tRNA(Cys) + L-cysteine + ATP = L-cysteinyl-tRNA(Cys) + AMP + diphosphate. The sequence is that of Cysteine--tRNA ligase from Prochlorococcus marinus (strain NATL1A).